A 351-amino-acid polypeptide reads, in one-letter code: Pentatricopeptide repeat-containing protein At2g40240, mitochondrial (351 aa).

The transit peptide at 1-27 directs the protein to the mitochondrion; sequence MSLLRRRFVKQSVNCITFLQILAERSF. 6 PPR repeats span residues 106–140, 141–175, 176–210, 211–245, 246–280, and 281–315; these read RKNAYDILISRLCKLGRIDDALIVIGDMSNGRLGL, TPSTYHPILCSLTRKYKIEEAWRVVESMRSKSVSM, DVTAYNYFLTSHCYDGELESASEVMRKIEEDGNSP, DSRSYDALVLGACRAGKVEAAMAILRRMEEDGVTV, LYSTHAHVITGLVEGGYYALGLEFVMAYAGKDLRL, and DSESFGFLAGKLVKRKRYEEAMIVVKEMVMRGLRM.

This sequence belongs to the PPR family. P subfamily.

It localises to the mitochondrion. The protein is Pentatricopeptide repeat-containing protein At2g40240, mitochondrial of Arabidopsis thaliana (Mouse-ear cress).